Consider the following 278-residue polypeptide: tRNA pseudouridine synthase A (278 aa).

Asp61 (nucleophile) is an active-site residue. Tyr119 contributes to the substrate binding site.

It belongs to the tRNA pseudouridine synthase TruA family. Homodimer.

It carries out the reaction uridine(38/39/40) in tRNA = pseudouridine(38/39/40) in tRNA. In terms of biological role, formation of pseudouridine at positions 38, 39 and 40 in the anticodon stem and loop of transfer RNAs. This chain is tRNA pseudouridine synthase A, found in Oleidesulfovibrio alaskensis (strain ATCC BAA-1058 / DSM 17464 / G20) (Desulfovibrio alaskensis).